Consider the following 295-residue polypeptide: Elongation factor Ts (295 aa).

Residues 79–82 are involved in Mg(2+) ion dislocation from EF-Tu; that stretch reads TDFV.

Belongs to the EF-Ts family.

It localises to the cytoplasm. Associates with the EF-Tu.GDP complex and induces the exchange of GDP to GTP. It remains bound to the aminoacyl-tRNA.EF-Tu.GTP complex up to the GTP hydrolysis stage on the ribosome. The chain is Elongation factor Ts from Bacillus cereus (strain B4264).